The sequence spans 871 residues: Protein TIC 100 (871 aa).

Residues 1-85 (MANEELTESQ…NANPETNIRR (85 aa)) are disordered. Residues 8–20 (ESQQQEDPSQQLP) show a composition bias toward polar residues. The span at 30–46 (SDSNSDSDASSQSSGDD) shows a compositional bias: low complexity. MORN repeat units lie at residues 219–239 (YEGT…AENG), 243–257 (YEGE…GHGV), and 337–352 (YAGQ…CGVY). Asn238 is subject to Deamidated asparagine. Residues 587–647 (MLDGLEKWTE…QEEEKKTEMG (61 aa)) adopt a coiled-coil conformation. Disordered stretches follow at residues 631–654 (EELK…EDED) and 669–721 (KEKI…NSPF). The segment covering 632 to 645 (ELKKKEQEEEKKTE) has biased composition (basic and acidic residues). Thr649 bears the Phosphothreonine mark. Positions 669-683 (KEKIQENKQEEKYKD) are enriched in basic and acidic residues. Residues 684-704 (DDDEDDDDGDDDDDDDDDDDL) show a composition bias toward acidic residues.

As to quaternary structure, part of the Tic complex. Component of the 1-MD complex, composed of TIC20-I, TIC214, TIC100 and TIC56. Interacts with the translocating preproteins. Hydrolysis of ATP is essential for the formation of this complex. The 1-MD complex interacts with TIC21. In terms of tissue distribution, preferentially expressed in ovules, and moderately expressed in leaves and siliques.

The protein localises to the plastid. Its subcellular location is the chloroplast inner membrane. In terms of biological role, involved in protein precursor import into chloroplasts. May be part of an intermediate translocation complex acting as a protein-conducting channel at the inner envelope. Plays an important role during embryogenesis and chloroplast biogenesis. In Arabidopsis thaliana (Mouse-ear cress), this protein is Protein TIC 100.